The chain runs to 172 residues: DNA-directed RNA polymerase II subunit RPB7 (172 aa).

It belongs to the eukaryotic RPB7/RPC8 RNA polymerase subunit family. Component of the RNA polymerase II (Pol II) complex consisting of 12 subunits. RPB4 and RPB7 form a subcomplex that protrudes from the 10-subunit Pol II core complex.

Its subcellular location is the nucleus. In terms of biological role, DNA-dependent RNA polymerase catalyzes the transcription of DNA into RNA using the four ribonucleoside triphosphates as substrates. Component of RNA polymerase II which synthesizes mRNA precursors and many functional non-coding RNAs. Pol II is the central component of the basal RNA polymerase II transcription machinery. It is composed of mobile elements that move relative to each other. RPB7 is part of a subcomplex with RPB4 that binds to a pocket formed by RPB1, RPB2 and RPB6 at the base of the clamp element. The RPB4-RPB7 subcomplex seems to lock the clamp via RPB7 in the closed conformation thus preventing double-stranded DNA to enter the active site cleft. The RPB4-RPB7 subcomplex binds single-stranded DNA and RNA. The protein is DNA-directed RNA polymerase II subunit RPB7 (polr2g) of Danio rerio (Zebrafish).